The chain runs to 312 residues: Malate dehydrogenase (312 aa).

NAD(+) is bound by residues 7–13 (GAAGGIG) and Asp-34. Substrate is bound by residues Arg-81 and Arg-87. NAD(+) contacts are provided by residues Asn-94 and 117-119 (ITN). Substrate is bound by residues Asn-119 and Arg-153. The active-site Proton acceptor is the His-177. Met-227 contacts NAD(+).

Belongs to the LDH/MDH superfamily. MDH type 1 family. In terms of assembly, homodimer.

The catalysed reaction is (S)-malate + NAD(+) = oxaloacetate + NADH + H(+). Its function is as follows. Catalyzes the reversible oxidation of malate to oxaloacetate. In Salmonella dublin (strain CT_02021853), this protein is Malate dehydrogenase.